The following is a 96-amino-acid chain: Small ribosomal subunit protein bS6 (96 aa).

This sequence belongs to the bacterial ribosomal protein bS6 family.

Its function is as follows. Binds together with bS18 to 16S ribosomal RNA. In Streptococcus pneumoniae serotype 2 (strain D39 / NCTC 7466), this protein is Small ribosomal subunit protein bS6.